A 1335-amino-acid chain; its full sequence is Membrane-associated phosphatidylinositol transfer protein 2 (1335 aa).

Disordered stretches follow at residues E32–G51 and E262–E341. A compositionally biased stretch (polar residues) spans K275 to G286. A compositionally biased stretch (low complexity) spans K299–R319. A phosphoserine mark is found at S334, S338, S365, and S586. Residues H606 to Y657 are disordered. Over residues G609 to G618 the composition is skewed to gly residues. S630 is subject to Phosphoserine. Basic and acidic residues predominate over residues G639 to D653. Residues S686, S687, and S688 each carry the phosphoserine modification. Residues F701–R949 form the DDHD domain. Position 814 is an omega-N-methylarginine (R814). Positions A861–S880 are disordered. S1263 carries the phosphoserine modification. The disordered stretch occupies residues T1282–V1313. Over residues Q1298–V1313 the composition is skewed to polar residues.

The protein belongs to the PtdIns transfer protein family. PI transfer class IIA subfamily. As to quaternary structure, interacts with CPNE4 (via VWFA domain). Interacts with PTK2B via its C-terminus. Detected in retina and in the dentate gyrus of the cerebellum.

The protein resides in the endomembrane system. It localises to the cytoplasm. It is found in the cytoskeleton. Catalyzes the transfer of phosphatidylinositol and phosphatidylcholine between membranes (in vitro). Binds calcium ions. The chain is Membrane-associated phosphatidylinositol transfer protein 2 (Pitpnm2) from Mus musculus (Mouse).